A 65-amino-acid polypeptide reads, in one-letter code: Large ribosomal subunit protein bL32 (65 aa).

The protein belongs to the bacterial ribosomal protein bL32 family.

This Phytoplasma australiense protein is Large ribosomal subunit protein bL32.